The primary structure comprises 753 residues: 5-methyltetrahydropteroyltriglutamate--homocysteine methyltransferase (753 aa).

Residues 17–20 (RELK) and Lys-117 each bind 5-methyltetrahydropteroyltri-L-glutamate. Residues 431-433 (IGS) and Glu-484 contribute to the L-homocysteine site. Residues 431-433 (IGS) and Glu-484 contribute to the L-methionine site. Residues 515–516 (RC) and Trp-561 each bind 5-methyltetrahydropteroyltri-L-glutamate. Asp-599 serves as a coordination point for L-homocysteine. Asp-599 provides a ligand contact to L-methionine. Glu-605 provides a ligand contact to 5-methyltetrahydropteroyltri-L-glutamate. His-641, Cys-643, and Glu-665 together coordinate Zn(2+). The active-site Proton donor is the His-694. Cys-726 is a binding site for Zn(2+).

The protein belongs to the vitamin-B12 independent methionine synthase family. It depends on Zn(2+) as a cofactor.

It carries out the reaction 5-methyltetrahydropteroyltri-L-glutamate + L-homocysteine = tetrahydropteroyltri-L-glutamate + L-methionine. It functions in the pathway amino-acid biosynthesis; L-methionine biosynthesis via de novo pathway; L-methionine from L-homocysteine (MetE route): step 1/1. Catalyzes the transfer of a methyl group from 5-methyltetrahydrofolate to homocysteine resulting in methionine formation. The polypeptide is 5-methyltetrahydropteroyltriglutamate--homocysteine methyltransferase (Escherichia coli O7:K1 (strain IAI39 / ExPEC)).